A 182-amino-acid polypeptide reads, in one-letter code: tRNA-splicing endonuclease (182 aa).

Residues Tyr-119, His-127, and Lys-158 contribute to the active site.

This sequence belongs to the tRNA-intron endonuclease family. Archaeal short subfamily. As to quaternary structure, homotetramer; although the tetramer contains four active sites, only two participate in the cleavage. Therefore, it should be considered as a dimer of dimers.

It carries out the reaction pretRNA = a 3'-half-tRNA molecule with a 5'-OH end + a 5'-half-tRNA molecule with a 2',3'-cyclic phosphate end + an intron with a 2',3'-cyclic phosphate and a 5'-hydroxyl terminus.. In terms of biological role, endonuclease that removes tRNA introns. Cleaves pre-tRNA at the 5'- and 3'-splice sites to release the intron. The products are an intron and two tRNA half-molecules bearing 2',3' cyclic phosphate and 5'-OH termini. Recognizes a pseudosymmetric substrate in which 2 bulged loops of 3 bases are separated by a stem of 4 bp. This Saccharolobus islandicus (strain M.14.25 / Kamchatka #1) (Sulfolobus islandicus) protein is tRNA-splicing endonuclease.